The following is a 281-amino-acid chain: NAD-dependent protein deacetylase 1 (281 aa).

The region spanning 1-281 (MEEGAALEGV…FDQILDALDL (281 aa)) is the Deacetylase sirtuin-type domain. Residues 24-44 (GAGV…GSLN) and 102-105 (QNVD) contribute to the NAD(+) site. The Proton acceptor role is filled by His-120. Positions 128, 131, 183, and 186 each coordinate Zn(2+). NAD(+) contacts are provided by residues 224-226 (GSS), 250-252 (NGG), and Val-268.

This sequence belongs to the sirtuin family. Class II subfamily. The cofactor is Zn(2+).

The protein localises to the cytoplasm. The catalysed reaction is N(6)-acetyl-L-lysyl-[protein] + NAD(+) + H2O = 2''-O-acetyl-ADP-D-ribose + nicotinamide + L-lysyl-[protein]. Its function is as follows. NAD-dependent protein deacetylase which modulates the activities of several enzymes which are inactive in their acetylated form. The chain is NAD-dependent protein deacetylase 1 from Corynebacterium efficiens (strain DSM 44549 / YS-314 / AJ 12310 / JCM 11189 / NBRC 100395).